A 196-amino-acid chain; its full sequence is Recombination protein RecR (196 aa).

A C4-type zinc finger spans residues 57 to 72; that stretch reads CERCNTFTEAPVCSTC. Positions 80 to 175 constitute a Toprim domain; that stretch reads RQLCVVETPA…SVTRLARGVP (96 aa).

It belongs to the RecR family.

May play a role in DNA repair. It seems to be involved in an RecBC-independent recombinational process of DNA repair. It may act with RecF and RecO. The polypeptide is Recombination protein RecR (Methylibium petroleiphilum (strain ATCC BAA-1232 / LMG 22953 / PM1)).